The chain runs to 897 residues: Alanine--tRNA ligase (897 aa).

Zn(2+)-binding residues include His581, His585, Cys684, and His688.

The protein belongs to the class-II aminoacyl-tRNA synthetase family. The cofactor is Zn(2+).

It is found in the cytoplasm. It carries out the reaction tRNA(Ala) + L-alanine + ATP = L-alanyl-tRNA(Ala) + AMP + diphosphate. Its function is as follows. Catalyzes the attachment of alanine to tRNA(Ala) in a two-step reaction: alanine is first activated by ATP to form Ala-AMP and then transferred to the acceptor end of tRNA(Ala). Also edits incorrectly charged Ser-tRNA(Ala) and Gly-tRNA(Ala) via its editing domain. The polypeptide is Alanine--tRNA ligase (Mycobacterium sp. (strain JLS)).